A 192-amino-acid chain; its full sequence is Ion-translocating oxidoreductase complex subunit A (192 aa).

Helical transmembrane passes span 5 to 25, 39 to 59, 63 to 83, 102 to 122, 134 to 154, and 171 to 191; these read ILLIISTALINNFVLVKFLGL, IGMSLATMFVLTVASISAYLI, ILTPLSATFLRTLVFILVIAV, LLGIFLPLITTNCAVLGVALL, VIYGFGASLGFGLVLVLFAAL, and SIALITAGLMSLAFMGFTGLV.

Belongs to the NqrDE/RnfAE family. The complex is composed of six subunits: RnfA, RnfB, RnfC, RnfD, RnfE and RnfG.

The protein localises to the cell inner membrane. In terms of biological role, part of a membrane-bound complex that couples electron transfer with translocation of ions across the membrane. The chain is Ion-translocating oxidoreductase complex subunit A from Pasteurella multocida (strain Pm70).